Here is a 578-residue protein sequence, read N- to C-terminus: Zinc finger protein with KRAB and SCAN domains 8 (578 aa).

Residues 1–20 form a disordered region; the sequence is MAEESRKPSAPSPPDQTPEE. Position 12 is a phosphoserine (S12). Residue K26 forms a Glycyl lysine isopeptide (Lys-Gly) (interchain with G-Cter in SUMO2) linkage. In terms of domain architecture, SCAN box spans 51 to 133; sequence RLRFRQLCYQ…TLLEDLERQI (83 aa). Positions 158 to 205 are disordered; sequence ASAPEPPNTQLQSEATQHKSPVPQESQERAMSTSQSPTRSQKGSSGDQ. Residues 165 to 205 are compositionally biased toward polar residues; sequence NTQLQSEATQHKSPVPQESQERAMSTSQSPTRSQKGSSGDQ. Residues K176 and K199 each participate in a glycyl lysine isopeptide (Lys-Gly) (interchain with G-Cter in SUMO2) cross-link. Phosphoserine is present on S201. The KRAB domain maps to 220–316; that stretch reads EKIEDMAVSL…GRLERQRGNP (97 aa). Residues K221, K272, and K288 each participate in a glycyl lysine isopeptide (Lys-Gly) (interchain with G-Cter in SUMO2) cross-link. C2H2-type zinc fingers lie at residues 322–344 and 350–372; these read HKCD…WRIH and YQCN…QDIH. Glycyl lysine isopeptide (Lys-Gly) (interchain with G-Cter in SUMO2) cross-links involve residues K374 and K376. 7 C2H2-type zinc fingers span residues 378 to 400, 406 to 428, 434 to 456, 462 to 484, 490 to 512, 518 to 540, and 546 to 568; these read YHCK…QRIH, YQCN…QRIH, YECN…QRIH, YECD…QRSH, YKCN…QRIH, and YKCK…LRIH. Residues K413 and K441 each participate in a glycyl lysine isopeptide (Lys-Gly) (interchain with G-Cter in SUMO2) cross-link. Residue K502 forms a Glycyl lysine isopeptide (Lys-Gly) (interchain with G-Cter in SUMO2) linkage. Residue K572 forms a Glycyl lysine isopeptide (Lys-Gly) (interchain with G-Cter in SUMO2) linkage.

The protein belongs to the krueppel C2H2-type zinc-finger protein family.

It localises to the nucleus. In terms of biological role, may be involved in transcriptional regulation. In Pan troglodytes (Chimpanzee), this protein is Zinc finger protein with KRAB and SCAN domains 8 (ZKSCAN8).